A 193-amino-acid polypeptide reads, in one-letter code: Large ribosomal subunit protein eL18 (193 aa).

Positions 158-193 are disordered; the sequence is HFGAAGVPGSHAKPFTSNRGKERQRSSARRRAFRHK. Residues 183–193 are compositionally biased toward basic residues; that stretch reads SSARRRAFRHK.

This sequence belongs to the eukaryotic ribosomal protein eL18 family.

It is found in the cytoplasm. This chain is Large ribosomal subunit protein eL18 (RPL18), found in Trypanosoma cruzi (strain CL Brener).